Consider the following 784-residue polypeptide: Endonuclease MutS2 (784 aa).

Residue 335 to 342 (GPNTGGKT) coordinates ATP. In terms of domain architecture, Smr spans 709-784 (LDLRGERYED…GTGVTIVELK (76 aa)).

This sequence belongs to the DNA mismatch repair MutS family. MutS2 subfamily. Homodimer. Binds to stalled ribosomes, contacting rRNA.

Its function is as follows. Endonuclease that is involved in the suppression of homologous recombination and thus may have a key role in the control of bacterial genetic diversity. Acts as a ribosome collision sensor, splitting the ribosome into its 2 subunits. Detects stalled/collided 70S ribosomes which it binds and splits by an ATP-hydrolysis driven conformational change. Acts upstream of the ribosome quality control system (RQC), a ribosome-associated complex that mediates the extraction of incompletely synthesized nascent chains from stalled ribosomes and their subsequent degradation. Probably generates substrates for RQC. The polypeptide is Endonuclease MutS2 (Geobacillus kaustophilus (strain HTA426)).